The primary structure comprises 553 residues: ATP synthase F(1) complex subunit alpha, mitochondrial (553 aa).

Residues 1–43 constitute a mitochondrion transit peptide; it reads MLSVRVAAAVARALPRRAGLVSKNALGSSFIAARNLHASNSRL. A Pyrrolidone carboxylic acid modification is found at Q44. Residues S53 and S65 each carry the phosphoserine modification. Position 76 is a phosphoserine; alternate (S76). Residue S76 is glycosylated (O-linked (GlcNAc) serine; alternate). Phosphoserine is present on S106. 3 positions are modified to N6-acetyllysine: K123, K126, and K132. T134 bears the Phosphothreonine mark. K161 carries the post-translational modification N6-acetyllysine; alternate. Position 161 is an N6-succinyllysine; alternate (K161). A Phosphoserine modification is found at S166. K167 carries the post-translational modification N6-acetyllysine; alternate. K167 bears the N6-succinyllysine; alternate mark. Phosphoserine is present on S184. R204 bears the Omega-N-methylarginine mark. ATP-binding residues include Q215, G217, K218, T219, and S220. T219 is a Mg(2+) binding site. N6-acetyllysine; alternate is present on residues K230 and K239. N6-succinyllysine; alternate is present on residues K230 and K239. K240 is modified (N6-acetyllysine). N6-acetyllysine; alternate occurs at positions 261 and 305. 2 positions are modified to N6-succinyllysine; alternate: K261 and K305. D312 is a binding site for Mg(2+). K427 bears the N6-acetyllysine; alternate mark. K427 bears the N6-succinyllysine; alternate mark. K434 carries the post-translational modification N6-acetyllysine. Q473 and Q475 together coordinate ATP. K498, K506, K531, and K539 each carry N6-acetyllysine; alternate. N6-succinyllysine; alternate is present on residues K498, K506, K531, and K539. The residue at position 541 (K541) is an N6-acetyllysine.

It belongs to the ATPase alpha/beta chains family. Homotrimer. Component of the ATP synthase complex composed at least of ATP5F1A/subunit alpha, ATP5F1B/subunit beta, ATP5MC1/subunit c (homooctomer), MT-ATP6/subunit a, MT-ATP8/subunit 8, ATP5ME/subunit e, ATP5MF/subunit f, ATP5MG/subunit g, ATP5MK/subunit k, ATP5MJ/subunit j, ATP5F1C/subunit gamma, ATP5F1D/subunit delta, ATP5F1E/subunit epsilon, ATP5PF/subunit F6, ATP5PB/subunit b, ATP5PD/subunit d, ATP5PO/subunit OSCP. ATP synthase complex consists of a soluble F(1) head domain (subunits alpha(3) and beta(3)) - the catalytic core - and a membrane F(0) domain - the membrane proton channel (subunits c, a, 8, e, f, g, k and j). These two domains are linked by a central stalk (subunits gamma, delta, and epsilon) rotating inside the F1 region and a stationary peripheral stalk (subunits F6, b, d, and OSCP). Interacts with ATPAF2. Interacts with HRG; the interaction occurs on the surface of T-cells and alters the cell morphology when associated with concanavalin (in vitro). Interacts with PLG (angiostatin peptide); the interaction inhibits most of the angiogenic properties of angiostatin. Interacts with BLOC1S1. Interacts with BCL2L1 isoform BCL-X(L); the interaction mediates the association of BCL2L1 isoform BCL-X(L) with the mitochondrial membrane F(1)F(0) ATP synthase and enhances neurons metabolic efficiency. Interacts with CLN5 and PPT1. Interacts with S100A1; this interaction increases F1-ATPase activity. Interacts with ABCB7; this interaction allows the regulation of cellular iron homeostasis and cellular reactive oxygen species (ROS) levels in cardiomyocytes. Post-translationally, acetylated on lysine residues. BLOC1S1 is required for acetylation. Heart muscle (at protein level). Heart and liver.

It localises to the mitochondrion inner membrane. Its subcellular location is the cell membrane. Subunit alpha, of the mitochondrial membrane ATP synthase complex (F(1)F(0) ATP synthase or Complex V) that produces ATP from ADP in the presence of a proton gradient across the membrane which is generated by electron transport complexes of the respiratory chain. ATP synthase complex consist of a soluble F(1) head domain - the catalytic core - and a membrane F(1) domain - the membrane proton channel. These two domains are linked by a central stalk rotating inside the F(1) region and a stationary peripheral stalk. During catalysis, ATP synthesis in the catalytic domain of F(1) is coupled via a rotary mechanism of the central stalk subunits to proton translocation. In vivo, can only synthesize ATP although its ATP hydrolase activity can be activated artificially in vitro. With the catalytic subunit beta (ATP5F1B), forms the catalytic core in the F(1) domain. Subunit alpha does not bear the catalytic high-affinity ATP-binding sites. In Bos taurus (Bovine), this protein is ATP synthase F(1) complex subunit alpha, mitochondrial.